Consider the following 711-residue polypeptide: MPSKKTDAPKQSEAAGTQTPDRANTNAKLQSLETFRSDATGQALRTNQGVKIADNQNSLKAGARGPSLLEDFIMREKITHFDHERIPERIVHARGTGAHGYFQSYGNHADLTKAGFLQDPDKITPVFVRFSTVQGPRGSGDTVRDVRGFAVKFYTDEGNFDLVGNNMPVFFIQDAIKFPDFVHAVKPEPHNEIPTGGSAHDTFWDFVSLVPESAHMVMWAMSDRAIPRSLRMMEGFGVHTFRLINAEGVASFVKFHWKPRQGVHSLLWDEAQKLAGKDTDFQRRDLWEAIENGDYPEWELGVQIVPEADEHKFDFDLLDPTKIIPEELVPVTPLGKMVLNRNPDNFFAEVEQVAFCPGHIVPGIDFTNDPLLQGRLFSYTDTQISRLGGPNFHQIPINRPVAPNHNNQRDALHQHVVHKGRASYEPNSIDGGWPKETPAAAQDGGFESYQERIDAHKIRQRSESFGDHFSQARLFFQSMSPTEQQHIIKAYSFELGKVEREHIRAREVNEILANIDLKLAAAVAANLGLPAPKAGTVQVKGSQLAQSPALSQMNHPGSVGIKGRKIAVLVANGVDAASVDKLIKALEAHSARPMLLGPTSAPVKATDGKQLPVEASMEGMPSIMFDGIVVPSGKASTDALAASGLAKHFLLEGYKHLKAMVLTKELATGLGLKEDKGLLLADDQKAVDAFVKAVEGHRVWEREAAAEAVPA.

The span at 1–10 shows a compositional bias: basic and acidic residues; that stretch reads MPSKKTDAPK. The tract at residues 1-27 is disordered; that stretch reads MPSKKTDAPKQSEAAGTQTPDRANTNA. Over residues 14–27 the composition is skewed to polar residues; sequence AAGTQTPDRANTNA. Residues His92 and Asn165 contribute to the active site. Heme is bound at residue Tyr379.

The protein belongs to the catalase family. HPII subfamily. Heme is required as a cofactor.

The protein localises to the cytoplasm. The enzyme catalyses 2 H2O2 = O2 + 2 H2O. Its function is as follows. Decomposes hydrogen peroxide into water and oxygen; serves to protect cells from the toxic effects of hydrogen peroxide. The polypeptide is Catalase HPII (katE) (Pseudomonas putida (Arthrobacter siderocapsulatus)).